A 387-amino-acid chain; its full sequence is MPVENEFPRELPNHSLISSKSQMTLQSIWLFRYPVSSIVCVQFPTDFPKPVLALSARIAIDLGLFTHIVQKCPITSRSLAAITGAEELLITRILRLLSTAHFAEETSTGTWAPTPITKTMAKEEIAAGYRFICHMVVPALQSAPGYFQHHGYSCPTDAKDGLVQHALQTKKTSFEYIMSDPHLLKDFNLFMGNGMGARKSWLDWYPVQSNILDGADADPDKALIVDVGGGKGHDLIAFHKRYPNAGRLVLEDLPAAFDDLGQYSMVIEKVPHDFLAEAQPVKGAKAYLCHHILHDWPDNYCVRILEGISSAMTPGYSKLLLHEGIVPEKGVCQFQAMSDIATMACNGGMERTREQWRTLLHMAGLQLIRFWNSPDEGGDGIIEAAKV.

Asp-252 serves as a coordination point for S-adenosyl-L-methionine. Catalysis depends on His-294, which acts as the Proton acceptor.

The protein belongs to the class I-like SAM-binding methyltransferase superfamily. Cation-independent O-methyltransferase family.

The protein operates within secondary metabolite biosynthesis. It functions in the pathway alkaloid biosynthesis. It participates in mycotoxin biosynthesis. O-methyltransferase; part of the gene cluster that mediates the biosynthesis of the aspoquinolone mycotoxins. The role of asqD within the aspoquinolone pathway has still to be determined. The first step of the pathway is catalyzed by the nonribosomal peptide synthetase asqK that condenses anthranilic acid and O-methyl-L-tyrosine to produce 4'-methoxycyclopeptin. 4'-methoxycyclopeptin is then converted to 4'-methoxydehydrocyclopeptin by the ketoglutarate-dependent dioxygenase asqJ. AsqJ also converts its first product 4'-methoxydehydrocyclopeptin to 4'-methoxycyclopenin. The following conversion of 4'-methoxycyclopenin into 4'-methoxyviridicatin is catalyzed by the cyclopenase asqI. 4'-methoxyviridicatin is the precursor of quinolone natural products, and is further converted to quinolinone B. The prenyltransferase asqH1 then catalyzes the canonical Friedel-Crafts alkylation of quinolinone B with dimethylallyl cation to yield dimethylallyl quinolone, which is subjected to FAD-dependent dehydrogenation by the FAD-linked oxidoreductase asqF to yield conjugated aryl diene. The delta(3') double bond then serves as the site of the second alkylation with DMAPP catalyzed by the prenyltransferase asqH2 to yield a carbenium ion intermediate, which can be attacked by H(2)O to yield a styrenyl quinolone containing a C3'-hydroxyprenyl chain. The FAD-dependent monooxygenase asqG performs epoxidation of the terminal C7'-C8' olefin. Finally, after dehydratation of the epoxide at C3 by asqC, the quinolone epoxide rearrangement protein asqO catalyzes an enzymatic 3-exo-tet cyclization to yield the cyclopropyl-THF ring system in aspoquinolone. This chain is O-methyltransferase asqD, found in Emericella nidulans (strain FGSC A4 / ATCC 38163 / CBS 112.46 / NRRL 194 / M139) (Aspergillus nidulans).